We begin with the raw amino-acid sequence, 349 residues long: 2-oxoglutarate and iron-dependent oxygenase domain-containing protein 2 (349 aa).

In terms of domain architecture, Fe2OG dioxygenase spans Asp-211–Ala-305. The Fe cation site is built by His-231, Asp-233, and His-286. Arg-296 is a 2-oxoglutarate binding site.

This sequence belongs to the OGFOD2 family. Fe(2+) serves as cofactor. It depends on L-ascorbate as a cofactor.

The polypeptide is 2-oxoglutarate and iron-dependent oxygenase domain-containing protein 2 (ogfod2) (Xenopus tropicalis (Western clawed frog)).